The chain runs to 188 residues: MSNALPSAPLDAADYIKSHIRTVPDWPEPGVQFRDITPLLQEPKSLRVLIDLFVQRYIDAKLDYIAGLDARGFIIGPILAYELNLGFIPIRKAGKLPYNRLAQSYELEYGCATVEIHEDACKPGDRVVIIDDLIATGGTMMAGKILLERLGAVVVEGAAIIDLPELGGSKLLRDSGLALYTVTGFEGH.

This sequence belongs to the purine/pyrimidine phosphoribosyltransferase family. As to quaternary structure, homodimer.

Its subcellular location is the cytoplasm. It carries out the reaction AMP + diphosphate = 5-phospho-alpha-D-ribose 1-diphosphate + adenine. Its pathway is purine metabolism; AMP biosynthesis via salvage pathway; AMP from adenine: step 1/1. In terms of biological role, catalyzes a salvage reaction resulting in the formation of AMP, that is energically less costly than de novo synthesis. This is Adenine phosphoribosyltransferase from Paraburkholderia xenovorans (strain LB400).